We begin with the raw amino-acid sequence, 222 residues long: Histidine biosynthesis bifunctional protein HisIE (222 aa).

Residues 1–128 are phosphoribosyl-AMP cyclohydrolase; it reads MQPLSPAFID…SLTLPPPMDA (128 aa). The segment at 129–222 is phosphoribosyl-ATP pyrophosphohydrolase; the sequence is CSELFRVIDQ…ANRRGAPRRN (94 aa).

The protein in the N-terminal section; belongs to the PRA-CH family. It in the C-terminal section; belongs to the PRA-PH family.

It is found in the cytoplasm. It carries out the reaction 1-(5-phospho-beta-D-ribosyl)-ATP + H2O = 1-(5-phospho-beta-D-ribosyl)-5'-AMP + diphosphate + H(+). The enzyme catalyses 1-(5-phospho-beta-D-ribosyl)-5'-AMP + H2O = 1-(5-phospho-beta-D-ribosyl)-5-[(5-phospho-beta-D-ribosylamino)methylideneamino]imidazole-4-carboxamide. Its pathway is amino-acid biosynthesis; L-histidine biosynthesis; L-histidine from 5-phospho-alpha-D-ribose 1-diphosphate: step 2/9. It functions in the pathway amino-acid biosynthesis; L-histidine biosynthesis; L-histidine from 5-phospho-alpha-D-ribose 1-diphosphate: step 3/9. The protein is Histidine biosynthesis bifunctional protein HisIE of Prochlorococcus marinus (strain MIT 9313).